The chain runs to 184 residues: Large ribosomal subunit protein bL9 (184 aa).

The tract at residues 160-184 (LQNQKSEQQEAEQDANKEAADGDDS) is disordered. Residues 173–184 (DANKEAADGDDS) show a composition bias toward basic and acidic residues.

It belongs to the bacterial ribosomal protein bL9 family.

Binds to the 23S rRNA. This Wolbachia sp. subsp. Drosophila simulans (strain wRi) protein is Large ribosomal subunit protein bL9.